A 150-amino-acid chain; its full sequence is Large ribosomal subunit protein uL15 (150 aa).

Positions 18–43 (IVGRGSSSGWGKTSGKGHKGQQARSG) are disordered.

Belongs to the universal ribosomal protein uL15 family. As to quaternary structure, part of the 50S ribosomal subunit.

Binds to the 23S rRNA. This Treponema denticola (strain ATCC 35405 / DSM 14222 / CIP 103919 / JCM 8153 / KCTC 15104) protein is Large ribosomal subunit protein uL15.